Reading from the N-terminus, the 246-residue chain is MAVTMRQMLEAGVHFGHQTRFWNPKMAPFIFGHRNKIHIINLEKTLPMFNDAQKYVRQLAANRGTILFVGTKRQSRDTIAQEAQRAGMPYVNARWLGGMMTNFKTLKVSIKRLKDMEAAVEAGELEKMSKKEALLFEREIAKLQKSIGGVKDMGGIPDAIFVVDVGYHKIAVTEANKLGVPVIAVVDTNHSPEGVDYVIPGNDDSSKAVALYAEGVADAILEGRANAVNEVVQAVRGDDEYVEENA.

Belongs to the universal ribosomal protein uS2 family.

The chain is Small ribosomal subunit protein uS2 from Burkholderia thailandensis (strain ATCC 700388 / DSM 13276 / CCUG 48851 / CIP 106301 / E264).